Consider the following 424-residue polypeptide: Dapdiamide A synthase (424 aa).

Residues 120–318 (QEQLALKGVA…QISKLAQAVL (199 aa)) enclose the ATP-grasp domain. 147 to 209 (AGHAHWPVVL…QEFLAGEEFV (63 aa)) is a binding site for ATP. Mg(2+)-binding residues include E275 and E287.

Requires Mg(2+) as cofactor. The cofactor is Mn(2+).

The enzyme catalyses 3-[[[(2R,3R)-3-carboxyoxiran-2-yl]carbonyl]amino]-L-alanine + L-valine + ATP = dapdiamide E + ADP + phosphate + H(+). It carries out the reaction N(3)-fumaramoyl-(S)-2,3-diaminopropanoate + L-valine + ATP = dapdiamide A + ADP + phosphate + H(+). The catalysed reaction is N(3)-fumaramoyl-(S)-2,3-diaminopropanoate + L-isoleucine + ATP = dapdiamide B + ADP + phosphate + H(+). It catalyses the reaction N(3)-fumaramoyl-(S)-2,3-diaminopropanoate + L-leucine + ATP = dapdiamide C + ADP + phosphate + H(+). It functions in the pathway antibiotic biosynthesis. In terms of biological role, involved in dapdiamide antibiotics biosynthesis. Ligates N-beta-fumaramoyl-DAP and valine, isoleucine or leucine to form dapdiamides A, B or C, respectively. Also ligates N-beta-epoxysuccinamoyl-DAP and valine to form dapdiamide E. This chain is Dapdiamide A synthase, found in Enterobacter agglomerans (Erwinia herbicola).